Here is a 417-residue protein sequence, read N- to C-terminus: Voltage-gated ClC-type chloride channel ClcB (417 aa).

A run of 10 helical transmembrane segments spans residues 5–25, 54–74, 146–166, 168–188, 222–242, 258–278, 288–308, 316–336, 349–371, and 380–400; these read LLIATLIGILAALAVAAFRHA, LITPALGGLAAGLLLWGWQKM, LWIASGAAAGMAGAYHAPLAG, LFIAEILFGTLMLASLGPVVV, VMIVSTGLVAGLCGPLLMWLM, WQLALGGLIVGLLSLLTPTVW, FLLSPPLFSLIGGIFACKILA, GAPGGVFTPTLFVGLSIGMFL, EIAILLGLAGMATLLAATTHAPI, and MTGEYQLLPGLLIACVVASVL.

This sequence belongs to the chloride channel (TC 2.A.49) family. ClcB subfamily.

The protein localises to the cell inner membrane. In terms of biological role, probably acts as an electrical shunt for an outwardly-directed proton pump that is linked to amino acid decarboxylation, as part of the extreme acid resistance (XAR) response. The polypeptide is Voltage-gated ClC-type chloride channel ClcB (Salmonella dublin (strain CT_02021853)).